Consider the following 305-residue polypeptide: GTP cyclohydrolase FolE2 (305 aa).

It belongs to the GTP cyclohydrolase IV family.

It catalyses the reaction GTP + H2O = 7,8-dihydroneopterin 3'-triphosphate + formate + H(+). The protein operates within cofactor biosynthesis; 7,8-dihydroneopterin triphosphate biosynthesis; 7,8-dihydroneopterin triphosphate from GTP: step 1/1. Converts GTP to 7,8-dihydroneopterin triphosphate. This Xanthomonas axonopodis pv. citri (strain 306) protein is GTP cyclohydrolase FolE2.